The primary structure comprises 473 residues: Phosphoglucosamine mutase (473 aa).

Ser-102 acts as the Phosphoserine intermediate in catalysis. Residues Ser-102, Asp-248, Asp-250, and Asp-252 each contribute to the Mg(2+) site. Position 102 is a phosphoserine (Ser-102).

The protein belongs to the phosphohexose mutase family. Mg(2+) is required as a cofactor. Activated by phosphorylation.

It carries out the reaction alpha-D-glucosamine 1-phosphate = D-glucosamine 6-phosphate. In terms of biological role, catalyzes the conversion of glucosamine-6-phosphate to glucosamine-1-phosphate. The polypeptide is Phosphoglucosamine mutase (Rhodospirillum centenum (strain ATCC 51521 / SW)).